The following is a 499-amino-acid chain: Cysteine--tRNA ligase (499 aa).

A Zn(2+)-binding site is contributed by Cys-30. The short motif at 32–42 (PTVYDRAHLGN) is the 'HIGH' region element. Zn(2+)-binding residues include Cys-221, His-246, and Glu-250. The 'KMSKS' region motif lies at 279 to 283 (KMSKS). Residue Lys-282 participates in ATP binding.

This sequence belongs to the class-I aminoacyl-tRNA synthetase family. As to quaternary structure, monomer. It depends on Zn(2+) as a cofactor.

Its subcellular location is the cytoplasm. The enzyme catalyses tRNA(Cys) + L-cysteine + ATP = L-cysteinyl-tRNA(Cys) + AMP + diphosphate. The protein is Cysteine--tRNA ligase of Cereibacter sphaeroides (strain ATCC 17023 / DSM 158 / JCM 6121 / CCUG 31486 / LMG 2827 / NBRC 12203 / NCIMB 8253 / ATH 2.4.1.) (Rhodobacter sphaeroides).